A 359-amino-acid chain; its full sequence is MKILSYLKKFYLFLLIGAIMQANESMGAKLPKTDERVIYLAGGCFWGLEAYMERIYGVIDASSGYANGKTSSTNYEKLHESDHAESVKVIYDPKKISLDKLLRYYFKVIDPVSVNKQGNDVGRQYRTGIYYVNSADKEVIDNALKALQKEVKGKIAIEVEPLKNYVRAEEYHQDYLKKHPGGYCHIDLKKADEVIVDDDKYTKPSDEVLKKKLTKLQYEVTQNKHTEKPFENEYYNKEEEGIYVDITTGEPLFSSADKYDSGCGWPSFSKPINKDVVKYEDDESLNRKRIEVLSRIGKAHLGHVFNDGPKELGGLRYCINSAALRFIPLKDMEKEGYGEFIPYIKKGELKKYIQDKKSH.

A peptide methionine sulfoxide reductase A region spans residues 36-189 (RVIYLAGGCF…PGGYCHIDLK (154 aa)). Cysteine 44 is a catalytic residue. Positions 206 to 329 (DEVLKKKLTK…NSAALRFIPL (124 aa)) constitute a MsrB domain. Cysteine 318 acts as the Nucleophile in catalysis.

This sequence in the N-terminal section; belongs to the MsrA Met sulfoxide reductase family. In the C-terminal section; belongs to the MsrB Met sulfoxide reductase family.

The enzyme catalyses L-methionyl-[protein] + [thioredoxin]-disulfide + H2O = L-methionyl-(S)-S-oxide-[protein] + [thioredoxin]-dithiol. It carries out the reaction [thioredoxin]-disulfide + L-methionine + H2O = L-methionine (S)-S-oxide + [thioredoxin]-dithiol. It catalyses the reaction L-methionyl-[protein] + [thioredoxin]-disulfide + H2O = L-methionyl-(R)-S-oxide-[protein] + [thioredoxin]-dithiol. Its function is as follows. Has an important function as a repair enzyme for proteins that have been inactivated by oxidation. Catalyzes the reversible oxidation-reduction of methionine sulfoxide in proteins to methionine. In Helicobacter pylori (strain J99 / ATCC 700824) (Campylobacter pylori J99), this protein is Peptide methionine sulfoxide reductase MsrA/MsrB (msrAB).